The chain runs to 190 residues: Putative 3-methyladenine DNA glycosylase (190 aa).

The protein belongs to the DNA glycosylase MPG family.

The chain is Putative 3-methyladenine DNA glycosylase from Deinococcus radiodurans (strain ATCC 13939 / DSM 20539 / JCM 16871 / CCUG 27074 / LMG 4051 / NBRC 15346 / NCIMB 9279 / VKM B-1422 / R1).